The chain runs to 247 residues: Small ribosomal subunit protein uS3 (247 aa).

A KH type-2 domain is found at 39–111 (IYDFFDKKVR…NISIQVIELK (73 aa)). The tract at residues 221-247 (EEMDLLNAPKDRRVRRGGERHASTKKN) is disordered. Basic and acidic residues predominate over residues 236-247 (RGGERHASTKKN).

It belongs to the universal ribosomal protein uS3 family. In terms of assembly, part of the 30S ribosomal subunit. Forms a tight complex with proteins S10 and S14.

Functionally, binds the lower part of the 30S subunit head. Binds mRNA in the 70S ribosome, positioning it for translation. The chain is Small ribosomal subunit protein uS3 from Metamycoplasma arthritidis (strain 158L3-1) (Mycoplasma arthritidis).